The sequence spans 225 residues: UPF0758 protein BCB4264_A4572 (225 aa).

The 123-residue stretch at 103–225 folds into the MPN domain; the sequence is SIRSPEDCAK…FVSLKEKGHI (123 aa). Zn(2+) is bound by residues His174, His176, and Asp187. A JAMM motif motif is present at residues 174–187; the sequence is HNHPSGDPTPSRED.

Belongs to the UPF0758 family.

The polypeptide is UPF0758 protein BCB4264_A4572 (Bacillus cereus (strain B4264)).